A 433-amino-acid polypeptide reads, in one-letter code: Probable carboxypeptidase ATEG_02905 (433 aa).

The signal sequence occupies residues 1–18 (MKSAISLLLASAATYVGA). Positions 20–40 (PHPEPPQLVLSPSTSTGVHGD) are disordered. Residue N92 is glycosylated (N-linked (GlcNAc...) asparagine). D161 is a binding site for Zn(2+). The active-site Proton acceptor is the E193. Zn(2+) is bound at residue E194.

Belongs to the peptidase M20A family. The cofactor is Zn(2+).

It localises to the secreted. This is Probable carboxypeptidase ATEG_02905 from Aspergillus terreus (strain NIH 2624 / FGSC A1156).